A 20-amino-acid chain; its full sequence is Pregnancy-associated glycoprotein 71D (20 aa).

Asparagine 4 is a glycosylation site (N-linked (GlcNAc...) asparagine).

This sequence belongs to the peptidase A1 family. In terms of tissue distribution, chorionic epithelium (trophectoderm) and placental cotyledons.

The protein localises to the secreted. Its subcellular location is the extracellular space. The sequence is that of Pregnancy-associated glycoprotein 71D from Bison bonasus (European bison).